Reading from the N-terminus, the 218-residue chain is MNQSSLLAEFGDPITRVENALLALKEGRGVLLLDDEDRENEGDIIYSVEHLTNAQMALMIRECSGIVCLCLTDEHANKLELPPMVVNNNSANQTAFTVSIEAKQGVTTGVSAQDRVTTIKTAANPSAKADDLARPGHVFPLRARPGGVLARRGHTEGTVDLMQMAGLQPAGVLCELTNPDGTMAKTPEIIAFGKQHNMPVLTIEDMVMYRNQYDLKLA.

Residues 38 to 39 (RE), D43, 151 to 155 (RRGHT), and E175 contribute to the D-ribulose 5-phosphate site. E39 serves as a coordination point for Mg(2+). H154 provides a ligand contact to Mg(2+).

Belongs to the DHBP synthase family. As to quaternary structure, homodimer. It depends on Mg(2+) as a cofactor. Mn(2+) serves as cofactor.

The catalysed reaction is D-ribulose 5-phosphate = (2S)-2-hydroxy-3-oxobutyl phosphate + formate + H(+). Its pathway is cofactor biosynthesis; riboflavin biosynthesis; 2-hydroxy-3-oxobutyl phosphate from D-ribulose 5-phosphate: step 1/1. Its function is as follows. Catalyzes the conversion of D-ribulose 5-phosphate to formate and 3,4-dihydroxy-2-butanone 4-phosphate. This chain is 3,4-dihydroxy-2-butanone 4-phosphate synthase, found in Vibrio vulnificus (strain CMCP6).